Here is a 445-residue protein sequence, read N- to C-terminus: Acyl-CoA Delta-4 desaturase (445 aa).

Residues 19-96 form the Cytochrome b5 heme-binding domain; that stretch reads AGVYTWEEVQ…MKPLLVGELA (78 aa). A run of 4 helical transmembrane segments spans residues 132–152, 153–173, 266–286, and 307–327; these read LFFL…LLMV, WHWG…ATAQ, YFFL…NIMM, and YMLC…MMFA.

This sequence belongs to the fatty acid desaturase type 1 family.

Its subcellular location is the membrane. It catalyses the reaction (8Z,11Z,14Z,17Z)-eicosatetraenoyl-CoA + 2 Fe(II)-[cytochrome b5] + O2 + 2 H(+) = (5Z,8Z,11Z,14Z,17Z)-eicosapentaenoyl-CoA + 2 Fe(III)-[cytochrome b5] + 2 H2O. It carries out the reaction (7Z,10Z,13Z,16Z)-docosatetraenoyl-CoA + 2 Fe(II)-[cytochrome b5] + O2 + 2 H(+) = (4Z,7Z,10Z,13Z,16Z)-docosapentaenoyl-CoA + 2 Fe(III)-[cytochrome b5] + 2 H2O. The catalysed reaction is (7Z,10Z,13Z,16Z,19Z)-docosapentaenoyl-CoA + 2 Fe(II)-[cytochrome b5] + O2 + 2 H(+) = (4Z,7Z,10Z,13Z,16Z,19Z)-docosahexaenoyl-CoA + 2 Fe(III)-[cytochrome b5] + 2 H2O. Its pathway is lipid metabolism; polyunsaturated fatty acid biosynthesis. Functionally, fatty acid desaturase with bifunctional delta-4 and delta-5 activities. Component of a lipid metabolic pathway that catalyzes the biosynthesis of polyunsaturated fatty acids (PUFA) with preference toward n-3 substrates and Delta(4)function. This Siganus canaliculatus (White-spotted spinefoot) protein is Acyl-CoA Delta-4 desaturase.